The chain runs to 369 residues: Isocitrate dehydrogenase [NAD] subunit 2, mitochondrial (369 aa).

A mitochondrion-targeting transit peptide spans 1–15; sequence MLRNTFFRNTSRRFL. Position 105 is a phosphothreonine (Thr105). 3 residues coordinate substrate: Arg119, Arg129, and Arg150. A Phosphothreonine modification is found at Thr153. Asp237 is a binding site for substrate. Residues Asp237, Asp263, and Asp267 each coordinate Mg(2+). Phosphothreonine is present on residues Thr327 and Thr349.

The protein belongs to the isocitrate and isopropylmalate dehydrogenases family. As to quaternary structure, octamer of two non-identical subunits IDH1 and IDH2. Mg(2+) is required as a cofactor. It depends on Mn(2+) as a cofactor.

It localises to the mitochondrion matrix. It carries out the reaction D-threo-isocitrate + NAD(+) = 2-oxoglutarate + CO2 + NADH. With respect to regulation, allosterically regulated by several compounds including AMP, NAD(+), and citrate. Performs an essential role in the oxidative function of the citric acid cycle. Also binds RNA; specifically to the 5'-untranslated leaders of mitochondrial mRNAs. In Saccharomyces cerevisiae (strain ATCC 204508 / S288c) (Baker's yeast), this protein is Isocitrate dehydrogenase [NAD] subunit 2, mitochondrial (IDH2).